The chain runs to 358 residues: Fructose-bisphosphate aldolase class 2 (358 aa).

Residue serine 61 coordinates D-glyceraldehyde 3-phosphate. Aspartate 109 serves as the catalytic Proton donor. Positions 110, 144, 174, and 226 each coordinate Zn(2+). A dihydroxyacetone phosphate-binding site is contributed by glycine 227. Histidine 264 lines the Zn(2+) pocket. Dihydroxyacetone phosphate-binding positions include 265–267 (GGS) and 286–289 (NIDT).

Belongs to the class II fructose-bisphosphate aldolase family. Zn(2+) serves as cofactor.

It carries out the reaction beta-D-fructose 1,6-bisphosphate = D-glyceraldehyde 3-phosphate + dihydroxyacetone phosphate. It participates in carbohydrate degradation; glycolysis; D-glyceraldehyde 3-phosphate and glycerone phosphate from D-glucose: step 4/4. Catalyzes the aldol condensation of dihydroxyacetone phosphate (DHAP or glycerone-phosphate) with glyceraldehyde 3-phosphate (G3P) to form fructose 1,6-bisphosphate (FBP) in gluconeogenesis and the reverse reaction in glycolysis. The chain is Fructose-bisphosphate aldolase class 2 (fbaA) from Buchnera aphidicola subsp. Acyrthosiphon pisum (strain APS) (Acyrthosiphon pisum symbiotic bacterium).